A 127-amino-acid polypeptide reads, in one-letter code: MAQSVPPGDIQTQPGTKIVFNAPYDDKHTYHIKVINSSARRIGYGIKTINMKRLGVDPPCGVLDPKEAVLLAVSCDAFAFGQEDTNNDRITVEWTNTPDGAAKQFRREWFQGDGMVRRKNLPIEYNP.

The residue at position 2 (alanine 2) is an N-acetylalanine. The 118-residue stretch at 9–126 (DIQTQPGTKI…RRKNLPIEYN (118 aa)) folds into the MSP domain.

Sperm.

The protein localises to the cell projection. The protein resides in the pseudopodium. It localises to the cytoplasm. Its subcellular location is the cytoskeleton. Central component in molecular interactions underlying sperm crawling. Forms an extensive filament system that extends from sperm villipoda, along the leading edge of the pseudopod. The polypeptide is Major sperm protein 49 (msp-49) (Caenorhabditis elegans).